The primary structure comprises 424 residues: UPF0597 protein Shewana3_2972 (424 aa).

It belongs to the UPF0597 family.

The protein is UPF0597 protein Shewana3_2972 of Shewanella sp. (strain ANA-3).